The following is a 429-amino-acid chain: Intraflagellar transport protein 57 homolog (429 aa).

Residues 305-369 (KYINNQLEHL…MEEKGSSMTD (65 aa)) adopt a coiled-coil conformation. Residues 335–426 (GNGGVTERTR…HAAVTPESAI (92 aa)) form a pDED region.

This sequence belongs to the IFT57 family. As to quaternary structure, component of the IFT complex B, at least composed of IFT20, IFT22, IFT25, IFT27, IFT46, IFT52, TRAF3IP1/IFT54, IFT57, IFT74, IFT80, IFT81, and IFT88. Interacts with IFT20. Interacts with IFT88. Interacts with IFT80, IFT-81, IFT74, IFT172, IFT70B and KIF17. Interacts with BLOC1S2. Interacts with RYBP. Interacts with HOMER1; the interaction possibly prevents the pro-apoptotic effects of IFT57. Interacts with HIP1. In normal conditions, it poorly interacts with HIP1, HIP1 being strongly associated with HTT. However, in mutant HTT proteins with a long poly-Gln region, interaction between HTT and HIP1 is inhibited, promoting the interaction between HIP1 and IFT57, leading to apoptosis. Interacts with BFAR. Interacts with TTC25. Interacts with USH1G. In terms of tissue distribution, present in retina and testis. In brain, it is present in the cortex, striatum, globus pallidus, hypothalamus and cerebellum. Present at high level in neurons and neuropil throughout the brain (at protein level). Expressed in hippocampal neurons, where it colocalizes with HOMER1 at postsynaptic regions.

It is found in the cell projection. The protein resides in the cilium. Its subcellular location is the cytoplasm. It localises to the cytoskeleton. The protein localises to the cilium basal body. It is found in the golgi apparatus. Functionally, required for the formation of cilia. Plays an indirect role in sonic hedgehog signaling, cilia being required for all activity of the hedgehog pathway. Has pro-apoptotic function via its interaction with HIP1, leading to recruit caspase-8 (CASP8) and trigger apoptosis. Has the ability to bind DNA sequence motif 5'-AAAGACATG-3' present in the promoter of caspase genes such as CASP1, CASP8 and CASP10, suggesting that it may act as a transcription regulator; however the relevance of such function remains unclear. This is Intraflagellar transport protein 57 homolog (Ift57) from Mus musculus (Mouse).